Consider the following 330-residue polypeptide: Beta-ketoacyl-[acyl-carrier-protein] synthase III (330 aa).

Active-site residues include Cys114 and His255. The tract at residues 256–260 (QANQR) is ACP-binding. The active site involves Asn285.

This sequence belongs to the thiolase-like superfamily. FabH family. In terms of assembly, homodimer.

It localises to the cytoplasm. It catalyses the reaction malonyl-[ACP] + acetyl-CoA + H(+) = 3-oxobutanoyl-[ACP] + CO2 + CoA. Its pathway is lipid metabolism; fatty acid biosynthesis. Functionally, catalyzes the condensation reaction of fatty acid synthesis by the addition to an acyl acceptor of two carbons from malonyl-ACP. Catalyzes the first condensation reaction which initiates fatty acid synthesis and may therefore play a role in governing the total rate of fatty acid production. Possesses both acetoacetyl-ACP synthase and acetyl transacylase activities. Its substrate specificity determines the biosynthesis of branched-chain and/or straight-chain of fatty acids. The chain is Beta-ketoacyl-[acyl-carrier-protein] synthase III from Trichormus variabilis (strain ATCC 29413 / PCC 7937) (Anabaena variabilis).